The chain runs to 457 residues: RuvB-like helicase 1 (457 aa).

Residue 72–79 (GAPGTGKT) coordinates ATP.

This sequence belongs to the RuvB family. May form heterododecamers with RVB2. Component of the SWR1 chromatin remodeling complex, the INO80 chromatin remodeling complex, and of the R2TP complex.

Its subcellular location is the nucleus. The catalysed reaction is ATP + H2O = ADP + phosphate + H(+). In terms of biological role, DNA helicase which participates in several chromatin remodeling complexes, including the SWR1 and the INO80 complexes. The SWR1 complex mediates the ATP-dependent exchange of histone H2A for the H2A variant HZT1 leading to transcriptional regulation of selected genes by chromatin remodeling. The INO80 complex remodels chromatin by shifting nucleosomes and is involved in DNA repair. Also involved in pre-rRNA processing. This chain is RuvB-like helicase 1 (RBV1), found in Debaryomyces hansenii (strain ATCC 36239 / CBS 767 / BCRC 21394 / JCM 1990 / NBRC 0083 / IGC 2968) (Yeast).